Here is a 361-residue protein sequence, read N- to C-terminus: Chorismate synthase (361 aa).

Residues Arg48 and Arg54 each contribute to the NADP(+) site. Residues 125–127 (RSS), 238–239 (NA), Gly278, 293–297 (KPTSS), and Arg319 each bind FMN.

The protein belongs to the chorismate synthase family. Homotetramer. The cofactor is FMNH2.

It carries out the reaction 5-O-(1-carboxyvinyl)-3-phosphoshikimate = chorismate + phosphate. Its pathway is metabolic intermediate biosynthesis; chorismate biosynthesis; chorismate from D-erythrose 4-phosphate and phosphoenolpyruvate: step 7/7. In terms of biological role, catalyzes the anti-1,4-elimination of the C-3 phosphate and the C-6 proR hydrogen from 5-enolpyruvylshikimate-3-phosphate (EPSP) to yield chorismate, which is the branch point compound that serves as the starting substrate for the three terminal pathways of aromatic amino acid biosynthesis. This reaction introduces a second double bond into the aromatic ring system. This Pectobacterium atrosepticum (strain SCRI 1043 / ATCC BAA-672) (Erwinia carotovora subsp. atroseptica) protein is Chorismate synthase.